A 247-amino-acid polypeptide reads, in one-letter code: ATP synthase subunit a, chloroplastic (247 aa).

5 helical membrane passes run 38–58 (QVLI…IIAV), 95–115 (VPFI…GALL), 134–154 (INTT…AGLS), 199–219 (LVVV…VMFL), and 220–240 (GLFT…AYIG).

This sequence belongs to the ATPase A chain family. As to quaternary structure, F-type ATPases have 2 components, CF(1) - the catalytic core - and CF(0) - the membrane proton channel. CF(1) has five subunits: alpha(3), beta(3), gamma(1), delta(1), epsilon(1). CF(0) has four main subunits: a, b, b' and c.

The protein localises to the plastid. It is found in the chloroplast thylakoid membrane. Key component of the proton channel; it plays a direct role in the translocation of protons across the membrane. The chain is ATP synthase subunit a, chloroplastic from Cucumis sativus (Cucumber).